A 399-amino-acid polypeptide reads, in one-letter code: 4-hydroxy-3-methylbut-2-enyl diphosphate reductase (399 aa).

Residue C66 coordinates [4Fe-4S] cluster. Residue H96 coordinates (2E)-4-hydroxy-3-methylbut-2-enyl diphosphate. H96 contributes to the dimethylallyl diphosphate binding site. H96 serves as a coordination point for isopentenyl diphosphate. C157 provides a ligand contact to [4Fe-4S] cluster. H185 serves as a coordination point for (2E)-4-hydroxy-3-methylbut-2-enyl diphosphate. H185 is a dimethylallyl diphosphate binding site. Position 185 (H185) interacts with isopentenyl diphosphate. Catalysis depends on E187, which acts as the Proton donor. T250 lines the (2E)-4-hydroxy-3-methylbut-2-enyl diphosphate pocket. C288 is a [4Fe-4S] cluster binding site. S317, S318, N319, and S380 together coordinate (2E)-4-hydroxy-3-methylbut-2-enyl diphosphate. S317, S318, N319, and S380 together coordinate dimethylallyl diphosphate. Residues S317, S318, N319, and S380 each contribute to the isopentenyl diphosphate site.

Belongs to the IspH family. [4Fe-4S] cluster is required as a cofactor.

The catalysed reaction is isopentenyl diphosphate + 2 oxidized [2Fe-2S]-[ferredoxin] + H2O = (2E)-4-hydroxy-3-methylbut-2-enyl diphosphate + 2 reduced [2Fe-2S]-[ferredoxin] + 2 H(+). It catalyses the reaction dimethylallyl diphosphate + 2 oxidized [2Fe-2S]-[ferredoxin] + H2O = (2E)-4-hydroxy-3-methylbut-2-enyl diphosphate + 2 reduced [2Fe-2S]-[ferredoxin] + 2 H(+). Its pathway is isoprenoid biosynthesis; dimethylallyl diphosphate biosynthesis; dimethylallyl diphosphate from (2E)-4-hydroxy-3-methylbutenyl diphosphate: step 1/1. The protein operates within isoprenoid biosynthesis; isopentenyl diphosphate biosynthesis via DXP pathway; isopentenyl diphosphate from 1-deoxy-D-xylulose 5-phosphate: step 6/6. In terms of biological role, catalyzes the conversion of 1-hydroxy-2-methyl-2-(E)-butenyl 4-diphosphate (HMBPP) into a mixture of isopentenyl diphosphate (IPP) and dimethylallyl diphosphate (DMAPP). Acts in the terminal step of the DOXP/MEP pathway for isoprenoid precursor biosynthesis. This Parasynechococcus marenigrum (strain WH8102) protein is 4-hydroxy-3-methylbut-2-enyl diphosphate reductase.